The sequence spans 426 residues: Putative acid phosphatase 1 (426 aa).

The first 18 residues, 1 to 18 (MRVLFYVSILVIIASVHT), serve as a signal peptide directing secretion. Residues 19 to 388 (QLISVHVIFR…SEWVMTPLSW (370 aa)) are Extracellular-facing. Histidine 29 (nucleophile) is an active-site residue. N-linked (GlcNAc...) asparagine glycans are attached at residues asparagine 37 and asparagine 145. Cysteine 133 and cysteine 369 are disulfide-bonded. Catalysis depends on aspartate 276, which acts as the Proton donor. The chain crosses the membrane as a helical span at residues 389–409 (IIVAIAILLLIALILMTYFVI). The Cytoplasmic portion of the chain corresponds to 410-426 (RYKNRSIVNIKKLSLEN).

This sequence belongs to the histidine acid phosphatase family.

The protein localises to the membrane. The enzyme catalyses a phosphate monoester + H2O = an alcohol + phosphate. The chain is Putative acid phosphatase 1 from Caenorhabditis elegans.